Consider the following 868-residue polypeptide: Leucine--tRNA ligase (868 aa).

A 'HIGH' region motif is present at residues 42–52 (PYPSGKLHMGH). The 'KMSKS' region signature appears at 627-631 (KMSKS). Lys630 is a binding site for ATP.

Belongs to the class-I aminoacyl-tRNA synthetase family.

It is found in the cytoplasm. The catalysed reaction is tRNA(Leu) + L-leucine + ATP = L-leucyl-tRNA(Leu) + AMP + diphosphate. The sequence is that of Leucine--tRNA ligase from Pseudomonas putida (strain W619).